The primary structure comprises 88 residues: Large ribosomal subunit protein bL31B (88 aa).

The protein belongs to the bacterial ribosomal protein bL31 family. Type B subfamily. Part of the 50S ribosomal subunit.

The polypeptide is Large ribosomal subunit protein bL31B (Janthinobacterium sp. (strain Marseille) (Minibacterium massiliensis)).